Consider the following 123-residue polypeptide: Preprofallaxidin-3 (123 aa).

The N-terminal stretch at 1–22 (MASLKKSLFLVLFLGLVSLSIC) is a signal peptide. A propeptide spanning residues 23–46 (EEKKRENEDDAEDENHEEESEEKR) is cleaved from the precursor. The interval 26-46 (KRENEDDAEDENHEEESEEKR) is disordered. Residues 30–42 (EDDAEDENHEEES) show a composition bias toward acidic residues. Leucine 62 is subject to Leucine amide. Positions 66–70 (SEEKR) are excised as a propeptide. The residue at position 74 (phenylalanine 74) is a Phenylalanine amide. Residues 78–82 (SEEKR) constitute a propeptide that is removed on maturation. Phenylalanine 88 is modified (phenylalanine amide). Positions 92–96 (SEEKR) are excised as a propeptide. Residue isoleucine 102 is modified to Isoleucine amide. Residues 106-110 (SEEKR) constitute a propeptide that is removed on maturation. Isoleucine 116 carries the isoleucine amide modification. A propeptide spanning residues 120-123 (KKKK) is cleaved from the precursor.

The protein belongs to the frog skin active peptide (FSAP) family. Brevinin subfamily. In terms of tissue distribution, expressed by the skin glands.

The protein localises to the secreted. Fallaxidin-1.1 shows no antibacterial activity against Gram-positive or Gram-negative bacteria. Does not inhibit the formation of NO by neuronal nitric oxide synthase. Has no effect on splenocyte proliferation or smooth muscle contraction. Its function is as follows. Fallaxidin-1.2 shows no antibacterial activity against Gram-positive or Gram-negative bacteria. Does not inhibit the formation of NO by neuronal nitric oxide synthase. Has no effect on splenocyte proliferation or smooth muscle contraction. In terms of biological role, fallaxidin-1.3 shows no antibacterial activity against Gram-positive or Gram-negative bacteria. Does not inhibit the formation of NO by neuronal nitric oxide synthase. Has no effect on splenocyte proliferation or smooth muscle contraction. Functionally, fallaxidin-3.2 shows antibacterial activity against the Gram-positive bacteria E.faecalis (MIC=100 uM) and L.lactis (MIC=500 uM). No antibacterial activity against the Gram-positive bacteria B.cereus, L.innocua, M.luteus, S.epidermidis, S.uberis and S.aureus, or the Gram-negative bacteria E.cloacae and E.coli. The polypeptide is Preprofallaxidin-3 (Litoria fallax (Eastern dwarf tree frog)).